The chain runs to 435 residues: UDP-glucuronic acid decarboxylase 1 (435 aa).

The interval 1-33 is disordered; that stretch reads MKQLHKQMSSKRDEETIPMSQSSPYSPKTLKHP. At 1–48 the chain is on the cytoplasmic side; it reads MKQLHKQMSSKRDEETIPMSQSSPYSPKTLKHPRSLPRSLHYLFREQR. A helical; Signal-anchor for type II membrane protein transmembrane segment spans residues 49–69; sequence LLFILVGILIGSTFFILQPSL. Over 70-435 the chain is Lumenal; sequence SRLGAAESTS…ILNEDEGKGL (366 aa). A compositionally biased stretch (polar residues) spans 91-100; the sequence is DSPPSRSTFN. Positions 91–110 are disordered; sequence DSPPSRSTFNSGGGGGRTGR. NAD(+)-binding residues include glycine 129, phenylalanine 130, valine 131, aspartate 150, asparagine 151, phenylalanine 153, threonine 154, glycine 155, aspartate 175, and valine 176. Isoleucine 180 serves as a coordination point for UDP-alpha-D-glucuronate. NAD(+) is bound at residue leucine 190. Lysine 208 provides a ligand contact to UDP-alpha-D-glucuronate. Threonine 209 is a binding site for NAD(+). Residues asparagine 216, glycine 219, lysine 222, and arginine 223 each contribute to the UDP-alpha-D-glucuronate site. Residues tyrosine 262 and lysine 266 each coordinate NAD(+). Catalysis depends on tyrosine 262, which acts as the Proton acceptor. Residue tyrosine 276 coordinates UDP-alpha-D-glucuronate. The NAD(+) site is built by threonine 292 and arginine 303. Residues 380–401 are disordered; the sequence is EFKPNTADDPHKRKPDISKAKE. Positions 385–401 are enriched in basic and acidic residues; sequence TADDPHKRKPDISKAKE.

It belongs to the NAD(P)-dependent epimerase/dehydratase family. UDP-glucuronic acid decarboxylase subfamily. The cofactor is NAD(+). In terms of tissue distribution, ubiquitous.

It is found in the golgi apparatus. Its subcellular location is the golgi stack membrane. It carries out the reaction UDP-alpha-D-glucuronate + H(+) = UDP-alpha-D-xylose + CO2. Its pathway is nucleotide-sugar biosynthesis; UDP-alpha-D-xylose biosynthesis; UDP-alpha-D-xylose from UDP-alpha-D-glucuronate: step 1/1. In terms of biological role, catalyzes the NAD-dependent decarboxylation of UDP-glucuronic acid to UDP-xylose. Necessary for the biosynthesis of the core tetrasaccharide in glycosaminoglycan biosynthesis. This is UDP-glucuronic acid decarboxylase 1 from Arabidopsis thaliana (Mouse-ear cress).